A 358-amino-acid chain; its full sequence is MRSFSSFHISPMKCKPALRVHPLCDKLQMEMDRWCVDFASPESSDEEMRSFIAQKLPFLSCMLFPTALNSRIPWLIKFVCWFTLFDSLVDDVKSLGANARDASAFVGKYLETIHGAKGAMAPVGGSLLSCFASLWQHFREDMPPRQYSRLVRHVLGLFQQSASQSRLRQEGAVLTASEFVAGKRMFSSGATLVLLMEYGLGVELDEEVLEQPAIRDIATTAIDHLICVNDILSFRVEYLSGDFSNLLSSICMSQGVGLQEAADQTLELMEDCNRRFVELHDLITRSSYFSTAVEGYIDGLGYMMSGNLEWSWLTARYHGVDWVAPNLKMRQGVMYLEEPPRFEPTMPLEAYISSSDSC.

It belongs to the terpene synthase family.

Its function is as follows. No terpene synthase activity detected in vitro. The polypeptide is Microbial Terpene synthase-like protein 13 (Selaginella moellendorffii (Spikemoss)).